A 110-amino-acid polypeptide reads, in one-letter code: Replication initiation control protein YabA (110 aa).

The Zn(2+) site is built by His84, Cys86, Cys100, and Cys103.

It belongs to the YabA family. Homotetramer. Interacts with both DnaA and DnaN, acting as a bridge between these two proteins. It depends on Zn(2+) as a cofactor.

It is found in the cytoplasm. The protein localises to the nucleoid. In terms of biological role, involved in control of chromosome replication initiation. Inhibits the cooperative binding of DnaA to the oriC region, thus negatively regulating initiation of chromosome replication. Inhibits the ability of DnaA-ATP to form a helix on DNA; does not disassemble preformed DnaA-DNA helices. Decreases the residence time of DnaA on the chromosome at its binding sites (oriC, replication forks and promoter-binding sites). Tethers DnaA to the replication machinery via the DNA polymerase beta sliding clamp subunit (dnaN). Associates with oriC and other DnaA targets on the chromosome in a DnaA-dependent manner. This chain is Replication initiation control protein YabA, found in Streptococcus mutans serotype c (strain ATCC 700610 / UA159).